The chain runs to 355 residues: Elongation factor Ts (355 aa).

The tract at residues 82–85 is involved in Mg(2+) ion dislocation from EF-Tu; it reads TDFV.

Belongs to the EF-Ts family.

It is found in the cytoplasm. Its function is as follows. Associates with the EF-Tu.GDP complex and induces the exchange of GDP to GTP. It remains bound to the aminoacyl-tRNA.EF-Tu.GTP complex up to the GTP hydrolysis stage on the ribosome. The protein is Elongation factor Ts (tsf) of Helicobacter pylori (strain ATCC 700392 / 26695) (Campylobacter pylori).